We begin with the raw amino-acid sequence, 348 residues long: Mycothiol acetyltransferase (348 aa).

2 consecutive N-acetyltransferase domains span residues 12–156 (TSMR…VDVT) and 169–330 (VAVR…HGTP). Position 44 (Glu44) interacts with 1D-myo-inositol 2-(L-cysteinylamino)-2-deoxy-alpha-D-glucopyranoside. 91–93 (LVV) contacts acetyl-CoA. The 1D-myo-inositol 2-(L-cysteinylamino)-2-deoxy-alpha-D-glucopyranoside site is built by Glu196, Lys235, and Glu253. Residues 257 to 259 (VGV) and 264 to 270 (QGLGMGR) contribute to the acetyl-CoA site. Tyr291 provides a ligand contact to 1D-myo-inositol 2-(L-cysteinylamino)-2-deoxy-alpha-D-glucopyranoside. Acetyl-CoA is bound at residue 296-301 (NTVAVH). A disordered region spans residues 320–348 (PPAGSPAHGTPLVRVTDTPSSPGDATMGS). Positions 336-348 (DTPSSPGDATMGS) are enriched in polar residues.

This sequence belongs to the acetyltransferase family. MshD subfamily. Monomer.

It carries out the reaction 1D-myo-inositol 2-(L-cysteinylamino)-2-deoxy-alpha-D-glucopyranoside + acetyl-CoA = mycothiol + CoA + H(+). Its function is as follows. Catalyzes the transfer of acetyl from acetyl-CoA to desacetylmycothiol (Cys-GlcN-Ins) to form mycothiol. In Cellulomonas flavigena (strain ATCC 482 / DSM 20109 / BCRC 11376 / JCM 18109 / NBRC 3775 / NCIMB 8073 / NRS 134), this protein is Mycothiol acetyltransferase.